The sequence spans 254 residues: Triosephosphate isomerase (254 aa).

Position 9 to 11 (9 to 11) interacts with substrate; sequence NWK. The active-site Electrophile is histidine 98. Glutamate 170 acts as the Proton acceptor in catalysis. Substrate is bound by residues glycine 176, serine 215, and 236–237; that span reads GG.

The protein belongs to the triosephosphate isomerase family. In terms of assembly, homodimer.

The protein localises to the cytoplasm. It carries out the reaction D-glyceraldehyde 3-phosphate = dihydroxyacetone phosphate. It functions in the pathway carbohydrate biosynthesis; gluconeogenesis. It participates in carbohydrate degradation; glycolysis; D-glyceraldehyde 3-phosphate from glycerone phosphate: step 1/1. Involved in the gluconeogenesis. Catalyzes stereospecifically the conversion of dihydroxyacetone phosphate (DHAP) to D-glyceraldehyde-3-phosphate (G3P). This Buchnera aphidicola subsp. Cinara cedri (strain Cc) protein is Triosephosphate isomerase.